A 221-amino-acid chain; its full sequence is Immediate early response gene 2 protein (221 aa).

Met1 bears the N-acetylmethionine mark. Residues 54 to 156 form a disordered region; sequence THQPEFPPSR…EGEATSEVSN (103 aa). Residues 64 to 77 show a composition bias toward basic and acidic residues; sequence RALDPRLHPPREPE. Residues 125–136 show a composition bias toward low complexity; sequence SDLSDGSDAGLV.

The protein belongs to the IER family.

It localises to the cytoplasm. The protein resides in the nucleus. DNA-binding protein that seems to act as a transcription factor. Involved in the regulation of neuronal differentiation, acts upon JNK-signaling pathway activation and plays a role in neurite outgrowth in hippocampal cells. May mediate with FIBP FGF-signaling in the establishment of laterality in the embryo. Promotes cell motility, seems to stimulate tumor metastasis. In Rattus norvegicus (Rat), this protein is Immediate early response gene 2 protein (Ier2).